The sequence spans 452 residues: Retinoid-inducible serine carboxypeptidase (452 aa).

The signal sequence occupies residues 1-28 (MELSRRICLVRLWLLLLSFLLGFSAGSA). Residues N64, N102, and N126 are each glycosylated (N-linked (GlcNAc...) asparagine). The active site involves S167. N192 and N362 each carry an N-linked (GlcNAc...) asparagine glycan. Catalysis depends on residues D371 and H431.

Belongs to the peptidase S10 family. Highly expressed in aorta, bladder, and kidney with much lower levels in all other tissues analyzed. Expression in kidney is restricted to proximal convoluted tubules.

The protein resides in the secreted. Functionally, may be involved in vascular wall and kidney homeostasis. The polypeptide is Retinoid-inducible serine carboxypeptidase (Scpep1) (Rattus norvegicus (Rat)).